A 53-amino-acid chain; its full sequence is Small, acid-soluble spore protein K (53 aa).

A disordered region spans residues 1–53 (MRNKEHNFPNQNNNKFEGEPRAKSEYASKRADGTTNTHPQERMRASGERSDFF). Basic and acidic residues-rich tracts occupy residues 16 to 32 (FEGE…KRAD) and 39 to 53 (PQER…SDFF).

It belongs to the SspK family.

It is found in the spore core. The chain is Small, acid-soluble spore protein K from Geobacillus thermodenitrificans (strain NG80-2).